A 239-amino-acid chain; its full sequence is Protein LIFEGUARD 2 (239 aa).

Transmembrane regions (helical) follow at residues 41-61 (LLVT…SVFF), 66-86 (AGFA…CPLY), 96-116 (YLLL…TCAF), 121-141 (VILE…LYTF), 156-176 (FLFG…LFPL), 179-199 (ISVM…IVYD), and 213-233 (IWAA…LLTL).

It belongs to the BI1 family. As to expression, expressed in seedlings, roots, leaves, inflorescences and flowers.

Its subcellular location is the membrane. Functionally, regulates the brassinosteroid (BR) signaling pathway that mediates cell elongation and organ morphogenesis. (Microbial infection) Facilitates the development of the powdery mildew fungus E.cruciferarum. In terms of biological role, (Microbial infection) May prevent cell death upon A.alternata f.sp. lycopersici (AAL) toxin treatment. The polypeptide is Protein LIFEGUARD 2 (Arabidopsis thaliana (Mouse-ear cress)).